Reading from the N-terminus, the 689-residue chain is Elongation factor G (689 aa).

Residues 8–282 (ERTRNIGIMA…GVVAYMPSPL (275 aa)) enclose the tr-type G domain. GTP is bound by residues 17–24 (AHIDAGKT), 81–85 (DTPGH), and 135–138 (NKMD).

The protein belongs to the TRAFAC class translation factor GTPase superfamily. Classic translation factor GTPase family. EF-G/EF-2 subfamily.

The protein resides in the cytoplasm. In terms of biological role, catalyzes the GTP-dependent ribosomal translocation step during translation elongation. During this step, the ribosome changes from the pre-translocational (PRE) to the post-translocational (POST) state as the newly formed A-site-bound peptidyl-tRNA and P-site-bound deacylated tRNA move to the P and E sites, respectively. Catalyzes the coordinated movement of the two tRNA molecules, the mRNA and conformational changes in the ribosome. The chain is Elongation factor G from Alkaliphilus metalliredigens (strain QYMF).